A 428-amino-acid chain; its full sequence is Tyrosine--tRNA ligase (428 aa).

Residue Tyr41 coordinates L-tyrosine. The short motif at 46–55 (PTADSLHLGH) is the 'HIGH' region element. L-tyrosine contacts are provided by Tyr179 and Gln183. A 'KMSKS' region motif is present at residues 239-243 (KFGKT). Lys242 provides a ligand contact to ATP. Positions 361-418 (ADLLQALVDSELQPSRGQARKTVASNAVTINGEKQADPEYVFSDSDRLFGRYTLLRRG) constitute an S4 RNA-binding domain.

This sequence belongs to the class-I aminoacyl-tRNA synthetase family. TyrS type 1 subfamily. Homodimer.

The protein resides in the cytoplasm. The catalysed reaction is tRNA(Tyr) + L-tyrosine + ATP = L-tyrosyl-tRNA(Tyr) + AMP + diphosphate + H(+). Catalyzes the attachment of tyrosine to tRNA(Tyr) in a two-step reaction: tyrosine is first activated by ATP to form Tyr-AMP and then transferred to the acceptor end of tRNA(Tyr). The sequence is that of Tyrosine--tRNA ligase from Klebsiella pneumoniae subsp. pneumoniae (strain ATCC 700721 / MGH 78578).